A 557-amino-acid chain; its full sequence is Hemolysin transporter protein ShlB (557 aa).

The N-terminal stretch at 1-18 (MIKKITALTLLVSTALSA) is a signal peptide. The POTRA domain occupies 79–152 (LPIAGVYLQG…GELGLSVTEG (74 aa)).

The protein belongs to the TPS (TC 1.B.20) family.

It is found in the cell outer membrane. In terms of biological role, interacts with the cell-bound hemolysin. Necessary for the extracellular secretion and activation of hemolysin. Member of a two partner secretion pathway (TPS) in which it mediates the secretion of hemolysin. The protein is Hemolysin transporter protein ShlB (shlB) of Serratia marcescens.